The sequence spans 122 residues: Large ribosomal subunit protein bL12 (122 aa).

The tract at residues 96-122 (APKSLKTGLSKDEANEMKKKLEDAGAT) is disordered. The span at 104 to 122 (LSKDEANEMKKKLEDAGAT) shows a compositional bias: basic and acidic residues.

This sequence belongs to the bacterial ribosomal protein bL12 family. As to quaternary structure, homodimer. Part of the ribosomal stalk of the 50S ribosomal subunit. Forms a multimeric L10(L12)X complex, where L10 forms an elongated spine to which 2 to 4 L12 dimers bind in a sequential fashion. Binds GTP-bound translation factors.

In terms of biological role, forms part of the ribosomal stalk which helps the ribosome interact with GTP-bound translation factors. Is thus essential for accurate translation. The sequence is that of Large ribosomal subunit protein bL12 from Liberibacter asiaticus (Citrus greening disease).